The chain runs to 475 residues: MQKSTNSDTSVETLNSTRQGTGAVQMRIKNANSHHDRLSQSKSMILTDVGKVTEPISRHRRNHSQHILKDVIPPLEQLMVEKEGYLQKAKIADGGKKLRKNWSTSWIVLSSRRIEFYKESKQQALSNMKTGHKPESVDLCGAHIEWAKEKSSRKNVFQITTVSGNEFLLQSDIDFIILDWFHAIKNAIDRLPKDSSCPSRNLELFKIQRSSSTELLSHYDSDIKEQKPEHRKSLMFRLHHSASDTSDKNRVKSRLKKFITRRPSLKTLQEKGLIKDQIFGSHLHKVCERENSTVPWFVKQCIEAVEKRGLDVDGIYRVSGNLATIQKLRFIVNQEEKLNLDDSQWEDIHVVTGALKMFFRELPEPLFPYSFFEQFVEAIKKQDNNTRIEAVKSLVQKLPPPNRDTMKVLFGHLTKIVAKASKNLMSTQSLGIVFGPTLLRAENETGNMAIHMVYQNQIAELMLSEYSKIFGSEED.

Positions 1–22 (MQKSTNSDTSVETLNSTRQGTG) are enriched in polar residues. A disordered region spans residues 1–23 (MQKSTNSDTSVETLNSTRQGTGA). Residues Ser-43, Ser-103, Ser-196, Ser-199, and Ser-243 each carry the phosphoserine modification. A PH domain is found at 79-189 (MVEKEGYLQK…WFHAIKNAID (111 aa)). The Rho-GAP domain maps to 281 to 470 (SHLHKVCERE…LMLSEYSKIF (190 aa)).

Expressed in lung, liver and lymphoid cells.

It is found in the cytoplasm. The protein localises to the membrane. In terms of biological role, GTPase activator for the Rho-type GTPases by converting them to an inactive GDP-bound state. Has activity toward RAC1. Overexpression results in an increase in actin stress fibers and cell contraction. This is Rho GTPase-activating protein 15 (ARHGAP15) from Homo sapiens (Human).